Consider the following 127-residue polypeptide: Small ribosomal subunit protein uS12 (127 aa).

Asp89 is subject to 3-methylthioaspartic acid.

Belongs to the universal ribosomal protein uS12 family. Part of the 30S ribosomal subunit. Contacts proteins S8 and S17. May interact with IF1 in the 30S initiation complex.

With S4 and S5 plays an important role in translational accuracy. Its function is as follows. Interacts with and stabilizes bases of the 16S rRNA that are involved in tRNA selection in the A site and with the mRNA backbone. Located at the interface of the 30S and 50S subunits, it traverses the body of the 30S subunit contacting proteins on the other side and probably holding the rRNA structure together. The combined cluster of proteins S8, S12 and S17 appears to hold together the shoulder and platform of the 30S subunit. In Akkermansia muciniphila (strain ATCC BAA-835 / DSM 22959 / JCM 33894 / BCRC 81048 / CCUG 64013 / CIP 107961 / Muc), this protein is Small ribosomal subunit protein uS12.